The sequence spans 294 residues: Arsenical-resistance protein ARR1 (294 aa).

Positions 1–11 are enriched in basic residues; that stretch reads MAKPRGRKGGR. Residues 1 to 29 are disordered; it reads MAKPRGRKGGRKPSLTPPKNKRAAQLRAS. Residues 22–45 are basic motif; that stretch reads RAAQLRASQNAFRKRKLERLEELE. The bZIP domain occupies 22 to 72; sequence RAAQLRASQNAFRKRKLERLEELEKKEAQLTVTNDQIHILKKENELLHFML. The segment at 44–72 is leucine-zipper; that stretch reads LEKKEAQLTVTNDQIHILKKENELLHFML. Cys-132, Cys-137, and Cys-274 together coordinate arsenite.

Belongs to the bZIP family. YAP subfamily. Homodimer. Post-translationally, phosphorylation by HOG1 promotes nuclear localization in the presence of arsenic.

The protein localises to the cytoplasm. Its subcellular location is the nucleus. Its activity is regulated as follows. Transcriptional activity is controlled by regulated degradation by the ubiquitin-proteasome pathway in absence of arsenic. Arsenic-exposure results in stabilization and increased transcriptional activity. Its function is as follows. Transcription activator required for resistance to arsenic compounds and for a regulated expression of ACR2, ACR3 and YCF1. This is Arsenical-resistance protein ARR1 from Saccharomyces cerevisiae (strain ATCC 204508 / S288c) (Baker's yeast).